We begin with the raw amino-acid sequence, 224 residues long: Dehydration-responsive element-binding protein 1G (224 aa).

Over residues 1–16 (MDVSAALSSDYSSGTP) the composition is skewed to polar residues. Residues 1–46 (MDVSAALSSDYSSGTPSPVAADADDGSSAYMTVSSAPPKRRAGRTK) are disordered. The segment at residues 54–111 (VFKGVRRRNPGRWVCEVREPHGKQRIWLGTFETAEMAARAHDVAALALRGRAACLNFA) is a DNA-binding region (AP2/ERF).

Belongs to the AP2/ERF transcription factor family. ERF subfamily.

Its subcellular location is the nucleus. Functionally, transcriptional activator that binds specifically to the DNA sequence 5'-[AG]CCGAC-3'. Binding to the C-repeat/DRE element mediates high salinity- and dehydration-inducible transcription. The polypeptide is Dehydration-responsive element-binding protein 1G (DREB1G) (Oryza sativa subsp. indica (Rice)).